Consider the following 550-residue polypeptide: Hydroxylamine reductase (550 aa).

Residues cysteine 3, cysteine 6, cysteine 18, and cysteine 25 each contribute to the [2Fe-2S] cluster site. Hybrid [4Fe-2O-2S] cluster is bound by residues histidine 249, glutamate 273, cysteine 317, cysteine 405, cysteine 433, cysteine 458, glutamate 492, and lysine 494. Residue cysteine 405 is modified to Cysteine persulfide.

The protein belongs to the HCP family. The cofactor is [2Fe-2S] cluster. Hybrid [4Fe-2O-2S] cluster serves as cofactor.

It is found in the cytoplasm. The enzyme catalyses A + NH4(+) + H2O = hydroxylamine + AH2 + H(+). Functionally, catalyzes the reduction of hydroxylamine to form NH(3) and H(2)O. This is Hydroxylamine reductase from Escherichia coli O6:K15:H31 (strain 536 / UPEC).